Reading from the N-terminus, the 357-residue chain is MDSPELTLRERQVLGIVIQSYVVSAAPVGSRYIARNYNLGLSDATIRNVMADLEREGFISQPHTSAGRVPTDKGYRYYVDLIMHVQRINDEEKRRIDADFGQLTCERKGTSTEVLFSAAKVLGTISRQLSVVLSPAFSNAVFEKLDMVLLSSSRMMVILSIRSLFLRTIVMELDIEVSRQMVDDVVAVLNERLSGLTLVEIRRTLVVRLSDCTCDSALLDRIVRSSGELFDETPMIERLYISGAEYIIDQPEFKQPEKVRDLISMIEDKTSVAKLVDDATAAVEAVKPQGMDVSITIGKENIERKAGELTILSTPYYVGDMVGKLGILGPTRMDYEHAVRVLNYMADCLSTTLSEVP.

This sequence belongs to the HrcA family.

Negative regulator of class I heat shock genes (grpE-dnaK-dnaJ and groELS operons). Prevents heat-shock induction of these operons. The chain is Heat-inducible transcription repressor HrcA from Chlorobium limicola (strain DSM 245 / NBRC 103803 / 6330).